The following is a 425-amino-acid chain: Septin-11 (425 aa).

The residue at position 2 (Ala-2) is an N-acetylalanine. Ser-9 carries the phosphoserine modification. Residues 38–304 (QGFCFNILCV…ELYRRCKLEE (267 aa)) enclose the Septin-type G domain. The interval 48-55 (GETGIGKS) is G1 motif. GTP is bound by residues 48–55 (GETGIGKS), Gly-103, 184–192 (KADTIAKNE), Gly-238, and Arg-253. The G3 motif stretch occupies residues 100–103 (DTVG). Residues 183–186 (AKAD) form a G4 motif region. Residues 320 to 410 (QETYEAKRNE…AAQLLQSQAQ (91 aa)) adopt a coiled-coil conformation. Residues 399–425 (KAAAQLLQSQAQQSGAQQTKKDKDKKN) form a disordered region. Residues 401 to 416 (AAQLLQSQAQQSGAQQ) are compositionally biased toward low complexity.

The protein belongs to the TRAFAC class TrmE-Era-EngA-EngB-Septin-like GTPase superfamily. Septin GTPase family. As to quaternary structure, septins polymerize into heterooligomeric protein complexes that form filaments, and can associate with cellular membranes, actin filaments and microtubules. Forms homooligomers. GTPase activity is required for filament formation. Interacts with SEPTIN7, SEPTIN9 and SEPTIN12.

Its subcellular location is the cytoplasm. The protein localises to the cytoskeleton. The protein resides in the synapse. It localises to the cell projection. It is found in the dendritic spine. Its subcellular location is the axon. Filament-forming cytoskeletal GTPase. May play a role in cytokinesis (Potential). May play a role in the cytoarchitecture of neurons, including dendritic arborization and dendritic spines, and in GABAergic synaptic connectivity. The sequence is that of Septin-11 from Bos taurus (Bovine).